The sequence spans 537 residues: 6-phosphogluconate dehydrogenase, decarboxylating 2, chloroplastic (537 aa).

The N-terminal 44 residues, 1–44 (MRSEVPSSTSPSFLSPPFIHLPLLSLSSPTPLPHSSSSTFSLFS), are a transit peptide targeting the chloroplast. Residues 55-60 (GLAVMG), 78-80 (NRT), 122-124 (VKA), and Asn-150 contribute to the NADP(+) site. Substrate is bound by residues Asn-150 and 176–178 (SGG). Lys-230 (proton acceptor) is an active-site residue. Substrate is bound at residue 233-234 (HN). Residue Glu-237 is the Proton donor of the active site. Tyr-238, Lys-308, Arg-335, Arg-500, and His-506 together coordinate substrate.

The protein belongs to the 6-phosphogluconate dehydrogenase family. Homodimer.

The protein localises to the plastid. It is found in the chloroplast. The catalysed reaction is 6-phospho-D-gluconate + NADP(+) = D-ribulose 5-phosphate + CO2 + NADPH. Its pathway is carbohydrate degradation; pentose phosphate pathway; D-ribulose 5-phosphate from D-glucose 6-phosphate (oxidative stage): step 3/3. Its function is as follows. Catalyzes the oxidative decarboxylation of 6-phosphogluconate to ribulose 5-phosphate and CO(2), with concomitant reduction of NADP to NADPH. This Spinacia oleracea (Spinach) protein is 6-phosphogluconate dehydrogenase, decarboxylating 2, chloroplastic.